The following is a 440-amino-acid chain: Methionine aminopeptidase 2-2 (440 aa).

The disordered stretch occupies residues 1–102 (MAAQVPTEAL…KGQEEEYRDE (102 aa)). Positions 36 to 46 (DSDDSDEEGEE) are enriched in acidic residues. Residues 56-70 (AKKKKKNKKKKKKKS) are compositionally biased toward basic residues. His194 is a substrate binding site. Asp214, Asp225, and His294 together coordinate a divalent metal cation. His302 contacts substrate. Residues Glu327 and Glu421 each contribute to the a divalent metal cation site.

The protein belongs to the peptidase M24A family. Methionine aminopeptidase eukaryotic type 2 subfamily. The cofactor is Co(2+). Zn(2+) serves as cofactor. Requires Mn(2+) as cofactor. Fe(2+) is required as a cofactor.

The protein resides in the cytoplasm. The catalysed reaction is Release of N-terminal amino acids, preferentially methionine, from peptides and arylamides.. Functionally, cotranslationally removes the N-terminal methionine from nascent proteins. The N-terminal methionine is often cleaved when the second residue in the primary sequence is small and uncharged (Met-Ala-, Cys, Gly, Pro, Ser, Thr, or Val). This chain is Methionine aminopeptidase 2-2, found in Colletotrichum graminicola (strain M1.001 / M2 / FGSC 10212) (Maize anthracnose fungus).